A 228-amino-acid polypeptide reads, in one-letter code: 7-cyano-7-deazaguanine synthase (228 aa).

Position 9 to 19 (9 to 19 (LSGGPDSTTVL)) interacts with ATP. Residues cysteine 193, cysteine 203, cysteine 206, and cysteine 209 each contribute to the Zn(2+) site.

Belongs to the QueC family. Zn(2+) serves as cofactor.

It catalyses the reaction 7-carboxy-7-deazaguanine + NH4(+) + ATP = 7-cyano-7-deazaguanine + ADP + phosphate + H2O + H(+). Its pathway is purine metabolism; 7-cyano-7-deazaguanine biosynthesis. Its function is as follows. Catalyzes the ATP-dependent conversion of 7-carboxy-7-deazaguanine (CDG) to 7-cyano-7-deazaguanine (preQ(0)). This chain is 7-cyano-7-deazaguanine synthase, found in Rickettsia massiliae (strain Mtu5).